We begin with the raw amino-acid sequence, 818 residues long: H(+)/Cl(-) exchange transporter 3 (818 aa).

The Cytoplasmic portion of the chain corresponds to 1 to 125 (MESEQLFHRG…WEMTKSLYDA (125 aa)). 3 short sequence motifs (di-leucine internalization motif; mediates targeting to late endosome and lysosome membranes) span residues 28 to 29 (LL), 46 to 47 (LL), and 71 to 75 (LLDLL). A helical transmembrane segment spans residues 126–163 (WSGWLVVTLTGLASGALAGLIDIAADWMTDLKEGICLS). Asparagine 177 carries N-linked (GlcNAc...) asparagine glycosylation. A helical membrane pass occupies residues 209–232 (MNYIMYIFWALSFAFLAVSLVKVF). Residues 238 to 242 (GSGIP) carry the Selectivity filter part_1 motif. Position 239 (serine 239) interacts with chloride. The helical intramembrane region spans 241–248 (IPEIKTIL). The next 2 membrane-spanning stretches (helical) occupy residues 258–276 (GKWTLMIKTITLVLAVASG) and 282–301 (EGPLVHVACCCGNIFSYLFP). The short motif at 280-284 (GKEGP) is the Selectivity filter part_2 element. 2 consecutive intramembrane regions (helical) follow at residues 313-325 (VLSAASAAGVSVA) and 329-337 (PIGGVLFSL). A run of 3 helical transmembrane segments spans residues 349 to 367 (LWRSFFAALVAAFVLRSIN), 391 to 416 (FPFILLGVFGGLWGAFFIRANIAWCR), and 423 to 443 (FGKYPVLEVIIVAAITAVIAF). 2 N-linked (GlcNAc...) asparagine glycosylation sites follow: asparagine 451 and asparagine 479. The next 2 helical transmembrane spans lie at 500–520 (IWQLCLALIFKIIMTVFTFGI) and 525–544 (GLFIPSMAIGAIAGRIVGIA). The Selectivity filter part_3 motif lies at 525–529 (GLFIP). Residue phenylalanine 527 participates in chloride binding. Intramembrane regions (helical) lie at residues 572–586 (GLYAMVGAAACLGGV) and 590–601 (TVSLVVIVFELT). Residues 602-605 (GGLE) constitute an intramembrane region (note=Loop between two helices). A helical membrane pass occupies residues 606–624 (YIVPLMAAVMTSKWVGDAF). The Cytoplasmic segment spans residues 625-818 (GREGIYEAHI…NQDPASIMFN (194 aa)). Residue tyrosine 630 coordinates chloride. 2 consecutive CBS domains span residues 658–722 (MRPR…ARKK) and 755–812 (LDMS…NQDP). Residues 689–691 (YNG) and 796–799 (TKKD) contribute to the ATP site.

This sequence belongs to the chloride channel (TC 2.A.49) family. ClC-3/CLCN3 subfamily. As to quaternary structure, monomer and homodimer. Forms heterodimers with CLCN4. In terms of assembly, interacts with GOPC, PDZK1 and NHERF1/EBP50. In terms of processing, N-glycosylated. Expressed primarily in tissues derived from neuroectoderm. Within the brain, its expression is particularly evident in the hippocampus, olfactory cortex, and olfactory bulb. Highly expressed in aortic and coronary vascular smooth muscle cells, and aortic endothelial cells. Also expressed in tracheal and alveolar epithelial cells, and intima and media of the pulmonary vessels. Expressed in bronchus and colon (at protein level).

The protein resides in the early endosome membrane. It is found in the late endosome membrane. Its subcellular location is the lysosome membrane. It localises to the cell membrane. The protein localises to the golgi apparatus membrane. The protein resides in the cell projection. It is found in the ruffle membrane. Strongly outwardly rectifying, electrogenic H(+)/Cl(-)exchanger which mediates the exchange of chloride ions against protons. The CLC channel family contains both chloride channels and proton-coupled anion transporters that exchange chloride or another anion for protons. The presence of conserved gating glutamate residues is typical for family members that function as antiporters. In terms of biological role, strongly outwardly rectifying, electrogenic H(+)/Cl(-)exchanger which mediates the exchange of chloride ions against protons. The polypeptide is H(+)/Cl(-) exchange transporter 3 (CLCN3) (Homo sapiens (Human)).